A 633-amino-acid polypeptide reads, in one-letter code: Basic helix-loop-helix ARNT-like protein 1 (633 aa).

Residues 1-65 (MADQRMDISS…GMDTDKDDQH (65 aa)) form a disordered region. Ser-17 is modified (phosphoserine; by GSK3-beta). The segment covering 24–33 (ISSSLSTSGM) has biased composition (polar residues). A Nuclear localization signal motif is present at residues 36 to 41 (NRKRKG). Positions 79 to 132 (NAREAHSQIEKRRRDKMNSFIDELASLVPTCNAMSRKLDKLTVLRMAVQHMKTL) constitute a bHLH domain. Ser-85 carries the post-translational modification Phosphoserine. Position 97 is a phosphoserine; by CK2 (Ser-97). Positions 149–159 (LSDDELKHLIL) match the Nuclear export signal 1 motif. Residues 150–222 (SDDELKHLIL…EQLSSSDTAP (73 aa)) form the PAS 1 domain. A Glycyl lysine isopeptide (Lys-Gly) (interchain with G-Cter in SUMO2 and SUMO3) cross-link involves residue Lys-259. Residue Lys-266 forms a Glycyl lysine isopeptide (Lys-Gly) (interchain with G-Cter in SUMO) linkage. A PAS 2 domain is found at 333–403 (PQPVNGEIRV…ECHRQVLQTR (71 aa)). Residues 368–376 (LAYLPQELL) carry the Nuclear export signal 2 motif. The 44-residue stretch at 408–451 (TNCYKFKIKDGSFITLRSRWFSFMNPWTKEVEYIVSTNTVVSTN) folds into the PAC domain. 2 disordered regions span residues 472 to 499 (SVLQAGEGGPKRTHPTVPGIPGGTRAGA) and 518 to 555 (GSSPSSCGSSPLNITSTPPPDTSSPGGKKILNGGTPDI). Residues 518–528 (GSSPSSCGSSP) show a composition bias toward low complexity. At Lys-545 the chain carries N6-acetyllysine.

In terms of assembly, component of the circadian clock oscillator which includes the CRY1/2 proteins, CLOCK or NPAS2, BMAL1 or BMAL2, CSNK1D and/or CSNK1E, TIMELESS and the PER1/2/3 proteins. Forms a heterodimer with CLOCK. The CLOCK-BMAL1 heterodimer is required for E-box-dependent transactivation, for CLOCK nuclear translocation and degradation, and, for phosphorylation of both CLOCK and BMAL1. Interacts with PER1, PER2, CRY1 and CRY2 and this interaction requires a translocation to the nucleus. Interaction of the CLOCK-BMAL1 heterodimer with PER or CRY inhibits transcription activation. In terms of processing, ubiquitinated, leading to its proteasomal degradation. Deubiquitinated by USP9X. Post-translationally, O-glycosylated; contains O-GlcNAc. O-glycosylation by OGT prevents protein degradation by inhibiting ubiquitination. It also stabilizes the CLOCK-BMAL1 heterodimer thereby increasing CLOCK-BMAL1-mediated transcription of genes in the negative loop of the circadian clock such as PER1/2/3 and CRY1/2. Acetylated on Lys-545 by CLOCK during the repression phase of the circadian cycle. Acetylation facilitates recruitment of CRY1 protein and initiates the repression phase of the circadian cycle. Acetylated at Lys-545 by KAT5 during the activation phase of the cycle, leading to recruitment of the positive transcription elongation factor b (P-TEFb) and BRD4, followed by productive elongation of circadian transcripts. Deacetylated by SIRT1, which may result in decreased protein stability. In terms of processing, phosphorylated upon dimerization with CLOCK. Phosphorylation enhances the transcriptional activity, alters the subcellular localization and decreases the stability of the CLOCK-BMAL1 heterodimer by promoting its degradation. Phosphorylation shows circadian variations in the liver with a peak between CT10 to CT14. Phosphorylation at Ser-97 by CK2 is essential for its nuclear localization, its interaction with CLOCK and controls CLOCK nuclear entry. Dephosphorylation at Ser-85 is important for dimerization with CLOCK and transcriptional activity. Post-translationally, sumoylated on Lys-266 upon dimerization with CLOCK. Predominantly conjugated to poly-SUMO2/3 rather than SUMO1 and the level of these conjugates undergo rhythmic variation, peaking at CT9-CT12. Sumoylation localizes it exclusively to the PML body and promotes its ubiquitination in the PML body, ubiquitin-dependent proteasomal degradation and the transcriptional activity of the CLOCK-BMAL1 heterodimer. Undergoes lysosome-mediated degradation in a time-dependent manner in the liver.

It localises to the nucleus. Its subcellular location is the cytoplasm. The protein resides in the PML body. In terms of biological role, transcriptional activator which forms a core component of the circadian clock. The circadian clock, an internal time-keeping system, regulates various physiological processes through the generation of approximately 24 hour circadian rhythms in gene expression, which are translated into rhythms in metabolism and behavior. It is derived from the Latin roots 'circa' (about) and 'diem' (day) and acts as an important regulator of a wide array of physiological functions including metabolism, sleep, body temperature, blood pressure, endocrine, immune, cardiovascular, and renal function. Consists of two major components: the central clock, residing in the suprachiasmatic nucleus (SCN) of the brain, and the peripheral clocks that are present in nearly every tissue and organ system. Both the central and peripheral clocks can be reset by environmental cues, also known as Zeitgebers (German for 'timegivers'). The predominant Zeitgeber for the central clock is light, which is sensed by retina and signals directly to the SCN. The central clock entrains the peripheral clocks through neuronal and hormonal signals, body temperature and feeding-related cues, aligning all clocks with the external light/dark cycle. Circadian rhythms allow an organism to achieve temporal homeostasis with its environment at the molecular level by regulating gene expression to create a peak of protein expression once every 24 hours to control when a particular physiological process is most active with respect to the solar day. Transcription and translation of core clock components (CLOCK, NPAS2, BMAL1, BMAL2, PER1, PER2, PER3, CRY1 and CRY2) plays a critical role in rhythm generation, whereas delays imposed by post-translational modifications (PTMs) are important for determining the period (tau) of the rhythms (tau refers to the period of a rhythm and is the length, in time, of one complete cycle). A diurnal rhythm is synchronized with the day/night cycle, while the ultradian and infradian rhythms have a period shorter and longer than 24 hours, respectively. Disruptions in the circadian rhythms contribute to the pathology of cardiovascular diseases, cancer, metabolic syndromes and aging. A transcription/translation feedback loop (TTFL) forms the core of the molecular circadian clock mechanism. Transcription factors, CLOCK or NPAS2 and BMAL1 or BMAL2, form the positive limb of the feedback loop, act in the form of a heterodimer and activate the transcription of core clock genes and clock-controlled genes (involved in key metabolic processes), harboring E-box elements (5'-CACGTG-3') within their promoters. The core clock genes: PER1/2/3 and CRY1/2 which are transcriptional repressors form the negative limb of the feedback loop and interact with the CLOCK|NPAS2-BMAL1|BMAL2 heterodimer inhibiting its activity and thereby negatively regulating their own expression. This heterodimer also activates nuclear receptors NR1D1/2 and RORA/B/G, which form a second feedback loop and which activate and repress BMAL1 transcription, respectively. The preferred binding motif for the CLOCK-BMAL1 heterodimer is 5'-CACGTGA-3', which contains a flanking adenine nucleotide at the 3-prime end of the canonical 6-nucleotide E-box sequence. CLOCK specifically binds to the half-site 5'-CAC-3', while BMAL1 binds to the half-site 5'-GTGA-3'. Essential for the rhythmic interaction of CLOCK with ASS1 and plays a critical role in positively regulating CLOCK-mediated acetylation of ASS1. Plays a role in protecting against lethal sepsis by limiting the expression of immune checkpoint protein CD274 in macrophages in a PKM2-dependent manner. The chain is Basic helix-loop-helix ARNT-like protein 1 (BMAL1) from Tyto alba (Barn owl).